Consider the following 457-residue polypeptide: Siroheme synthase (457 aa).

Residues 1–204 (MDHLPIFCQL…ADEKAVNATT (204 aa)) form a precorrin-2 dehydrogenase /sirohydrochlorin ferrochelatase region. NAD(+) contacts are provided by residues 22–23 (DV) and 43–44 (LT). Serine 128 is subject to Phosphoserine. The tract at residues 216–457 (GEVVLVGAGP…RDKLNWFSNY (242 aa)) is uroporphyrinogen-III C-methyltransferase. Proline 225 serves as a coordination point for S-adenosyl-L-methionine. Aspartate 248 functions as the Proton acceptor in the catalytic mechanism. Lysine 270 serves as the catalytic Proton donor. S-adenosyl-L-methionine-binding positions include 301–303 (GGD), isoleucine 306, 331–332 (TA), methionine 382, and glycine 411.

The protein in the N-terminal section; belongs to the precorrin-2 dehydrogenase / sirohydrochlorin ferrochelatase family. In the C-terminal section; belongs to the precorrin methyltransferase family.

The enzyme catalyses uroporphyrinogen III + 2 S-adenosyl-L-methionine = precorrin-2 + 2 S-adenosyl-L-homocysteine + H(+). The catalysed reaction is precorrin-2 + NAD(+) = sirohydrochlorin + NADH + 2 H(+). It catalyses the reaction siroheme + 2 H(+) = sirohydrochlorin + Fe(2+). Its pathway is cofactor biosynthesis; adenosylcobalamin biosynthesis; precorrin-2 from uroporphyrinogen III: step 1/1. It functions in the pathway cofactor biosynthesis; adenosylcobalamin biosynthesis; sirohydrochlorin from precorrin-2: step 1/1. The protein operates within porphyrin-containing compound metabolism; siroheme biosynthesis; precorrin-2 from uroporphyrinogen III: step 1/1. It participates in porphyrin-containing compound metabolism; siroheme biosynthesis; siroheme from sirohydrochlorin: step 1/1. Its pathway is porphyrin-containing compound metabolism; siroheme biosynthesis; sirohydrochlorin from precorrin-2: step 1/1. Multifunctional enzyme that catalyzes the SAM-dependent methylations of uroporphyrinogen III at position C-2 and C-7 to form precorrin-2 via precorrin-1. Then it catalyzes the NAD-dependent ring dehydrogenation of precorrin-2 to yield sirohydrochlorin. Finally, it catalyzes the ferrochelation of sirohydrochlorin to yield siroheme. This chain is Siroheme synthase, found in Salmonella gallinarum (strain 287/91 / NCTC 13346).